The sequence spans 370 residues: Translocating chain-associated membrane protein 2 (370 aa).

Topologically, residues 1 to 22 are cytoplasmic; sequence MAFRRRTKSYPLFSQEFVIHNH. Residues 23–43 traverse the membrane as a helical segment; that stretch reads ADIGFCLVLCVLIGLMFEVTA. Over 44 to 75 the chain is Extracellular; that stretch reads KTAFLFILPQYNISVPTADSETVHYHYGPKDL. An N-linked (GlcNAc...) asparagine glycan is attached at Asn55. Residues 76–96 traverse the membrane as a helical segment; it reads VTILFYIFITIILHAVVQEYI. The Cytoplasmic segment spans residues 97 to 119; that stretch reads LDKISKRLHLSKVKHSKFNESGQ. In terms of domain architecture, TLC spans 112–321; that stretch reads SKFNESGQLV…HSQLRHWREY (210 aa). A helical membrane pass occupies residues 120-140; sequence LVVFHFTSVIWCFYVVVTEGY. Residues 141–159 lie on the Extracellular side of the membrane; that stretch reads LTNPRSLWEDYPHVHLPFQ. Residues 160–180 form a helical membrane-spanning segment; that stretch reads VKFFYLCQLAYWLHALPELYF. The Cytoplasmic portion of the chain corresponds to 181 to 191; the sequence is QKVRKEEIPRQ. A helical membrane pass occupies residues 192–209; that stretch reads LQYICLYLVHIAGAYLLN. Topologically, residues 210–214 are extracellular; the sequence is LSRLG. A helical transmembrane segment spans residues 215 to 235; it reads LILLLLQYSTEFLFHTARLFY. Over 236 to 250 the chain is Cytoplasmic; that stretch reads FADENNEKLFSAWAA. Residues 251–271 form a helical membrane-spanning segment; the sequence is VFGVTRLFILTLAVLAIGFGL. Topologically, residues 272 to 287 are extracellular; it reads ARMENQAFDPEKGNFN. Residues 288–308 form a helical membrane-spanning segment; sequence TLFCRLCVLLLVCAAQAWLMW. The Cytoplasmic segment spans residues 309 to 370; it reads RFIHSQLRHW…SPRTKKLKSP (62 aa). A disordered region spans residues 348–370; that stretch reads YHENGVVKAENGTSPRTKKLKSP.

This sequence belongs to the TRAM family. Interacts with SERCA2B and COL1A1.

The protein localises to the membrane. Its function is as follows. Necessary for collagen type I synthesis. May couple the activity of the ER Ca(2+) pump SERCA2B with the activity of the translocon. This coupling may increase the local Ca(2+) concentration at the site of collagen synthesis, and a high Ca(2+) concentration may be necessary for the function of molecular chaperones involved in collagen folding. Required for proper insertion of the first transmembrane helix N-terminus of TM4SF20 into the ER lumen, may act as a ceramide sensor for regulated alternative translocation (RAT). The sequence is that of Translocating chain-associated membrane protein 2 (TRAM2) from Homo sapiens (Human).